Consider the following 392-residue polypeptide: HORMA domain-containing protein 1 (392 aa).

One can recognise an HORMA domain in the interval 25–227; that stretch reads HQSLMFVKRL…TPFHTFRLKV (203 aa). The interval 323–359 is disordered; that stretch reads SELDVSESKTRSGKIFQSKMVNGNNQQGQTSKENRKR. Residues 341 to 353 show a composition bias toward polar residues; it reads KMVNGNNQQGQTS. At Ser375 the chain carries Phosphoserine. The Nuclear localization signal motif lies at 381–384; the sequence is KKRR.

In terms of assembly, interacts with HORMAD2. Interacts with IHO1. In terms of processing, phosphorylated at Ser-375 in a SPO11-dependent manner. As to expression, specifically expressed in meiotic germ cells.

The protein localises to the nucleus. It localises to the chromosome. It is found in the cytoplasm. In terms of biological role, plays a key role in meiotic progression. Regulates 3 different functions during meiosis: ensures that sufficient numbers of processed DNA double-strand breaks (DSBs) are available for successful homology search by increasing the steady-state numbers of single-stranded DSB ends. Promotes synaptonemal-complex formation independently of its role in homology search. Plays a key role in the male mid-pachytene checkpoint and the female meiotic prophase checkpoint: required for efficient build-up of ATR activity on unsynapsed chromosome regions, a process believed to form the basis of meiotic silencing of unsynapsed chromatin (MSUC) and meiotic prophase quality control in both sexes. The polypeptide is HORMA domain-containing protein 1 (Mus musculus (Mouse)).